The sequence spans 1058 residues: MDEHGDHRQSNPFNDQQTSSGKILRIRLENFMCHSNLEIEFGDWVNFITGQNGSGKSAILTALCVAFGCRARGTQRAATLKDFIKTGCSYALVYVELKNQGEDAFKPEIYGDTLIIERRISDSTSLTVLKDHQGRKISSRKEELRELVEHYNIDVENPCVIMSQDKSREFLHSGNDKDKFKFFYKATLLQQVDDILQSIGTKLNSANALLDEMEKTIKPIEKEINELLEKIKNMEHVEEITQQVLHLKKKLAWSWVYDVDRQLKEQNEKIVKFKERVPTCQNKIDRKLGEVESLRVSLTEKKAQVACLIDESTAMKRELECLRQSMKKAAREKIALEEEYHHKCSNIQKIKDRVRRLERQIEDINEMTIRSTQVEQSEIEGKLNQLTVEVEKAESLVSSLKEEENMVMEKASAGGKEKEHIEEMIRDHEKKQRNMNAHINDLKKHQTNKVTAFGGDKVINLLRAIERHHRRFKMPPIGPIGAHVTLINGNRWASAVEQALGNLLNAFIVTDHKDLVALRDCGKEAKYNNLKIIIYDFSRPRLDIPRHMIPQTEHPTILSVLHSENTTVLNVLVDVSCVERHVLAENYEVGKIIAFERRLSHLKDVFTIDGYRMFSRGPVQTTLPPRPRRPTRLCASFDDQIKDLEIEASREQSEIQECRGQKREAEMNLEGLESTMRRLKKQRTQLEKDLTRKELEMQDLKNSVASETKASPTSSVNELHLEIMKFQKEIEEKESLLEKLQDSLKEAELKANELKASYENLYESAKGEIEALEKAEDELKEKEDELHSAETEKNHYEDIMKDKVLPEIKQAETIYKELEMKRQESNKKASIICPESEIKALGPWDGPTPLQLSAQINKINHRLKRENENYSESIDDLRIMHGEKEQKIGKKRKTYKSCREKLKVCKDAVDSRWNKLQRNKDLLKRELTWQFNHHLGKKGISGNIRVSYEDKTLSIEVKMPQDATNSAVRDTRGLSGGERSFSTLCFTLALQNMTEAPIRAMDEFDVFMDAVSRKISLDTLIDFALKQGSQWMFITPHDISMVKSHEKIKKQQMAAPRS.

The 1027-residue stretch at 23 to 1049 (ILRIRLENFM…SMVKSHEKIK (1027 aa)) folds into the Zinc-hook domain. 50 to 57 (GQNGSGKS) contacts ATP. Residues 136-449 (KISSRKEELR…NDLKKHQTNK (314 aa)) adopt a coiled-coil conformation. The flexible hinge stretch occupies residues 450–633 (VTAFGGDKVI…PPRPRRPTRL (184 aa)). The stretch at 634–927 (CASFDDQIKD…RNKDLLKREL (294 aa)) forms a coiled coil.

It belongs to the SMC family. SMC6 subfamily. In terms of assembly, forms a heterodimer with SMC5. The SMC5-SMC6 complex is composed of the SMC5 and SMC6 heterodimer attached via their hinge domain and from the non-SMC subunit NSE4A or NSE4B. In terms of tissue distribution, expressed in seedlings, rosette leaves and floral buds.

Its subcellular location is the nucleus. The protein localises to the chromosome. Its function is as follows. Core component of the SMC5-SMC6 complex that promotes sister chromatid alignment after DNA damage and facilitates double-stranded DNA breaks (DSBs) repair via homologous recombination between sister chromatids. This is Structural maintenance of chromosomes protein 6A (SMC6A) from Arabidopsis thaliana (Mouse-ear cress).